The following is a 451-amino-acid chain: UDP-N-acetylmuramoylalanine--D-glutamate ligase (451 aa).

118-124 (GTKGKST) serves as a coordination point for ATP.

Belongs to the MurCDEF family.

It localises to the cytoplasm. It catalyses the reaction UDP-N-acetyl-alpha-D-muramoyl-L-alanine + D-glutamate + ATP = UDP-N-acetyl-alpha-D-muramoyl-L-alanyl-D-glutamate + ADP + phosphate + H(+). Its pathway is cell wall biogenesis; peptidoglycan biosynthesis. Functionally, cell wall formation. Catalyzes the addition of glutamate to the nucleotide precursor UDP-N-acetylmuramoyl-L-alanine (UMA). This Borreliella burgdorferi (strain ZS7) (Borrelia burgdorferi) protein is UDP-N-acetylmuramoylalanine--D-glutamate ligase.